A 380-amino-acid chain; its full sequence is Cytochrome b (380 aa).

Helical transmembrane passes span 34–54, 78–99, 114–134, and 179–199; these read FGSL…LLAM, WLIR…YLHI, WNTG…GYVL, and FFAL…VHLT. Heme b-binding residues include His-84 and His-98. Residues His-183 and His-197 each contribute to the heme b site. Position 202 (His-202) interacts with a ubiquinone. A run of 4 helical transmembrane segments spans residues 227–247, 289–309, 321–341, and 348–368; these read LKDI…ALFS, LGGV…PFLH, LSQL…WVGS, and FIII…ILFP.

This sequence belongs to the cytochrome b family. As to quaternary structure, the cytochrome bc1 complex contains 11 subunits: 3 respiratory subunits (MT-CYB, CYC1 and UQCRFS1), 2 core proteins (UQCRC1 and UQCRC2) and 6 low-molecular weight proteins (UQCRH/QCR6, UQCRB/QCR7, UQCRQ/QCR8, UQCR10/QCR9, UQCR11/QCR10 and a cleavage product of UQCRFS1). This cytochrome bc1 complex then forms a dimer. The cofactor is heme b.

Its subcellular location is the mitochondrion inner membrane. In terms of biological role, component of the ubiquinol-cytochrome c reductase complex (complex III or cytochrome b-c1 complex) that is part of the mitochondrial respiratory chain. The b-c1 complex mediates electron transfer from ubiquinol to cytochrome c. Contributes to the generation of a proton gradient across the mitochondrial membrane that is then used for ATP synthesis. In Procellaria parkinsoni (Black petrel), this protein is Cytochrome b (MT-CYB).